The sequence spans 342 residues: tRNA N6-adenosine threonylcarbamoyltransferase (342 aa).

Fe cation contacts are provided by His112 and His116. Residues 134-138 (LASGG), Asp167, Gly180, and Asn280 contribute to the substrate site. Asp308 is a binding site for Fe cation.

Belongs to the KAE1 / TsaD family. It depends on Fe(2+) as a cofactor.

It localises to the cytoplasm. It catalyses the reaction L-threonylcarbamoyladenylate + adenosine(37) in tRNA = N(6)-L-threonylcarbamoyladenosine(37) in tRNA + AMP + H(+). In terms of biological role, required for the formation of a threonylcarbamoyl group on adenosine at position 37 (t(6)A37) in tRNAs that read codons beginning with adenine. Is involved in the transfer of the threonylcarbamoyl moiety of threonylcarbamoyl-AMP (TC-AMP) to the N6 group of A37, together with TsaE and TsaB. TsaD likely plays a direct catalytic role in this reaction. The protein is tRNA N6-adenosine threonylcarbamoyltransferase of Rickettsia canadensis (strain McKiel).